An 82-amino-acid chain; its full sequence is Small ribosomal subunit protein bS16 (82 aa).

The protein belongs to the bacterial ribosomal protein bS16 family.

This chain is Small ribosomal subunit protein bS16, found in Serratia proteamaculans (strain 568).